We begin with the raw amino-acid sequence, 348 residues long: Phenylalanine--tRNA ligase alpha subunit (348 aa).

Position 259 (Glu259) interacts with Mg(2+).

This sequence belongs to the class-II aminoacyl-tRNA synthetase family. Phe-tRNA synthetase alpha subunit type 1 subfamily. Tetramer of two alpha and two beta subunits. Mg(2+) serves as cofactor.

The protein localises to the cytoplasm. It catalyses the reaction tRNA(Phe) + L-phenylalanine + ATP = L-phenylalanyl-tRNA(Phe) + AMP + diphosphate + H(+). The polypeptide is Phenylalanine--tRNA ligase alpha subunit (Lactiplantibacillus plantarum (strain ATCC BAA-793 / NCIMB 8826 / WCFS1) (Lactobacillus plantarum)).